Here is a 509-residue protein sequence, read N- to C-terminus: UDP-N-acetylmuramoylalanine--D-glutamate ligase (509 aa).

116–122 (GTNGKST) serves as a coordination point for ATP.

The protein belongs to the MurCDEF family.

Its subcellular location is the cytoplasm. It catalyses the reaction UDP-N-acetyl-alpha-D-muramoyl-L-alanine + D-glutamate + ATP = UDP-N-acetyl-alpha-D-muramoyl-L-alanyl-D-glutamate + ADP + phosphate + H(+). It functions in the pathway cell wall biogenesis; peptidoglycan biosynthesis. Functionally, cell wall formation. Catalyzes the addition of glutamate to the nucleotide precursor UDP-N-acetylmuramoyl-L-alanine (UMA). This Wolbachia pipientis wMel protein is UDP-N-acetylmuramoylalanine--D-glutamate ligase.